A 581-amino-acid chain; its full sequence is Putative ABC transporter ATP-binding protein MM_1996 (581 aa).

Residues 10–250 (IEIRDLWYTY…LEVFHRLGLR (241 aa)) form the ABC transporter 1 domain. 44–51 (GPTGCGKS) serves as a coordination point for ATP. The disordered stretch occupies residues 287 to 309 (GDYPASPGRKEKTSSPGWSSENN). A compositionally biased stretch (polar residues) spans 300-309 (SSPGWSSENN). In terms of domain architecture, ABC transporter 2 spans 313–541 (VSVRDLWSGY…IDILRKASLT (229 aa)). An ATP-binding site is contributed by 346 to 353 (GTNGSGKS).

It belongs to the ABC transporter superfamily.

The protein resides in the cell membrane. Functionally, probably part of an ABC transporter complex. Responsible for energy coupling to the transport system. In Methanosarcina mazei (strain ATCC BAA-159 / DSM 3647 / Goe1 / Go1 / JCM 11833 / OCM 88) (Methanosarcina frisia), this protein is Putative ABC transporter ATP-binding protein MM_1996.